Consider the following 294-residue polypeptide: MNGILSTTEVDSQAELSCPAPAKLNLFLHVVGRREDGYHLLQTVFRLVDFADQLHFGLRADGVIKLHTPTPGVPEEQDLCVRAAKLLQRESGTPWGANIFLEKRIPMGGGLGGGSSDAATTLLALNRLWKLGWRRNQLLKLAPELGADVPVFVFSENAFAEGIGEKLLPIALPPAWYLILTPPVHVSTAKVFSSKELTRNTIPIKIPPFSTEQGHNDLEPVVCASYPEVARHLEWLRQLEGARMAAMTGSGACVFAEFATESGARSALGKIPYGMKGFVAQGLDRHPLHDFAEQ.

The active site involves K23. Residue P106–S116 participates in ATP binding. D148 is an active-site residue.

Belongs to the GHMP kinase family. IspE subfamily.

It catalyses the reaction 4-CDP-2-C-methyl-D-erythritol + ATP = 4-CDP-2-C-methyl-D-erythritol 2-phosphate + ADP + H(+). Its pathway is isoprenoid biosynthesis; isopentenyl diphosphate biosynthesis via DXP pathway; isopentenyl diphosphate from 1-deoxy-D-xylulose 5-phosphate: step 3/6. Its function is as follows. Catalyzes the phosphorylation of the position 2 hydroxy group of 4-diphosphocytidyl-2C-methyl-D-erythritol. The sequence is that of 4-diphosphocytidyl-2-C-methyl-D-erythritol kinase from Nitrosospira multiformis (strain ATCC 25196 / NCIMB 11849 / C 71).